The primary structure comprises 930 residues: Short transient receptor potential channel 6 (930 aa).

The tract at residues 1–27 (MSQSPRFVTRRGGSLKAAPGAGTRRNE) is disordered. At 1–437 (MSQSPRFVTR…CSKMGKILRG (437 aa)) the chain is on the cytoplasmic side. ANK repeat units follow at residues 96–125 (IEEE…SLNV), 131–160 (MGQN…LSRV), 162–188 (DALL…FAEG), and 217–246 (HDVT…RIER). The chain crosses the membrane as a helical span at residues 438–458 (PFMKFVAHAASFTIFLGLLVM). Residues 459–486 (NAADRFEGTKLLPNETSTDNARQLFRMK) lie on the Extracellular side of the membrane. A helical transmembrane segment spans residues 487-507 (TSCFSWMEMLIISWVIGMIWA). The Cytoplasmic segment spans residues 508 to 520 (ECKEIWTQGPKEY). A helical membrane pass occupies residues 521–541 (LFELWNMLDFGMLAIFAASFI). Residues 542-591 (ARFMAFWHASKAQSIIDANDTLKDLTKVTLGDNVKYYNLARIKWDPTDPQ) are Extracellular-facing. N-linked (GlcNAc...) asparagine glycosylation occurs at Asn-560. Residues 592–612 (IISEGLYAIAVVLSFSRIAYI) traverse the membrane as a helical segment. Topologically, residues 613–635 (LPANESFGPLQISLGRTVKDIFK) are cytoplasmic. A helical membrane pass occupies residues 636–656 (FMVIFIMVFVAFMIGMFNLYS). Residues 657-705 (YYIGAKQNEAFTTVEESFKTLFWAIFGLSEVKSVVINYNHKFIENIGYV) lie on the Extracellular side of the membrane. The helical transmembrane segment at 706-726 (LYGVYNVTMVIVLLNMLIAMI) threads the bilayer. Residues 727–930 (NSSFQEIEDD…LEPKLEESRR (204 aa)) are Cytoplasmic-facing. The residue at position 814 (Ser-814) is a Phosphoserine.

Belongs to the transient receptor (TC 1.A.4) family. STrpC subfamily. TRPC6 sub-subfamily. Homodimer; forms channel complex. Interacts with MX1 and RNF24. In terms of processing, phosphorylated by FYN, leading to an increase of TRPC6 channel activity. Post-translationally, N-glycosylated. Lung and brain.

The protein localises to the cell membrane. The enzyme catalyses Ca(2+)(in) = Ca(2+)(out). In terms of biological role, forms a receptor-activated non-selective calcium permeant cation channel. Probably is operated by a phosphatidylinositol second messenger system activated by receptor tyrosine kinases or G-protein coupled receptors. Activated by diacylglycerol (DAG) in a membrane-delimited fashion, independently of protein kinase C. Seems not to be activated by intracellular calcium store depletion. In Mus musculus (Mouse), this protein is Short transient receptor potential channel 6.